The following is a 580-amino-acid chain: Glutamine--tRNA ligase (580 aa).

Positions 51–61 (PEPNGYLHIGH) match the 'HIGH' region motif. ATP-binding positions include 52–54 (EPN) and 58–64 (HIGHAKS). L-glutamine is bound by residues Asp84 and Tyr233. Residues Thr252 and 287 to 288 (RL) contribute to the ATP site. The short motif at 294 to 298 (ITSKR) is the 'KMSKS' region element.

Belongs to the class-I aminoacyl-tRNA synthetase family. As to quaternary structure, monomer.

The protein resides in the cytoplasm. It catalyses the reaction tRNA(Gln) + L-glutamine + ATP = L-glutaminyl-tRNA(Gln) + AMP + diphosphate. This Ralstonia nicotianae (strain ATCC BAA-1114 / GMI1000) (Ralstonia solanacearum) protein is Glutamine--tRNA ligase.